Reading from the N-terminus, the 238-residue chain is Probable transcriptional regulatory protein CF0838 (238 aa).

Belongs to the TACO1 family.

The protein localises to the cytoplasm. This chain is Probable transcriptional regulatory protein CF0838, found in Chlamydia felis (strain Fe/C-56) (Chlamydophila felis).